The following is a 225-amino-acid chain: MKKKLSIAIDGPAAAGKSTVAKIVAAKKSYIYIDTGAMYRAITLAALQHGVDLEDEQALDALLKKTVIELVSTGEGQKVHLDNTDVTEEIRTDRVSNQVSVVAKHRAVREEMVRRQQELGKKGGVVMDGRDIGTHVLPDAEVKIFLLASVEERAKRRFEENQKKGYDVNYDQLIEEIARRDKLDSEREVSPLKKADDAIEIDTTSLSIQEVAGKILDAADRVEKQ.

Position 11 to 19 (11 to 19 (GPAAAGKST)) interacts with ATP.

This sequence belongs to the cytidylate kinase family. Type 1 subfamily.

The protein resides in the cytoplasm. It catalyses the reaction CMP + ATP = CDP + ADP. It carries out the reaction dCMP + ATP = dCDP + ADP. In Bacillus pumilus (strain SAFR-032), this protein is Cytidylate kinase.